The following is a 311-amino-acid chain: Pyrimidine-specific ribonucleoside hydrolase RihA (311 aa).

His-240 is an active-site residue.

It belongs to the IUNH family. RihA subfamily.

Functionally, hydrolyzes cytidine or uridine to ribose and cytosine or uracil, respectively. This Salmonella enteritidis PT4 (strain P125109) protein is Pyrimidine-specific ribonucleoside hydrolase RihA.